The chain runs to 426 residues: Histidine--tRNA ligase (426 aa).

Belongs to the class-II aminoacyl-tRNA synthetase family. In terms of assembly, homodimer.

The protein localises to the cytoplasm. The enzyme catalyses tRNA(His) + L-histidine + ATP = L-histidyl-tRNA(His) + AMP + diphosphate + H(+). In Corynebacterium kroppenstedtii (strain DSM 44385 / JCM 11950 / CIP 105744 / CCUG 35717), this protein is Histidine--tRNA ligase.